Here is a 307-residue protein sequence, read N- to C-terminus: Phospho-N-acetylmuramoyl-pentapeptide-transferase (307 aa).

Transmembrane regions (helical) follow at residues 3–23 (IILF…KYWI), 47–67 (SGTP…FLFF), 71–91 (FFPS…DFKL), 105–125 (IFLS…DYKI), 137–157 (IFYV…INLT), 162–182 (GLAG…NFQF), 186–206 (LTLE…FNSH), 210–230 (IFMG…LSII), 237–257 (LVFL…QVFF), and 285–305 (VVWR…ILWN).

This sequence belongs to the glycosyltransferase 4 family. MraY subfamily. It depends on Mg(2+) as a cofactor.

It localises to the cell inner membrane. The enzyme catalyses UDP-N-acetyl-alpha-D-muramoyl-L-alanyl-gamma-D-glutamyl-meso-2,6-diaminopimeloyl-D-alanyl-D-alanine + di-trans,octa-cis-undecaprenyl phosphate = di-trans,octa-cis-undecaprenyl diphospho-N-acetyl-alpha-D-muramoyl-L-alanyl-D-glutamyl-meso-2,6-diaminopimeloyl-D-alanyl-D-alanine + UMP. It participates in cell wall biogenesis; peptidoglycan biosynthesis. Its function is as follows. Catalyzes the initial step of the lipid cycle reactions in the biosynthesis of the cell wall peptidoglycan: transfers peptidoglycan precursor phospho-MurNAc-pentapeptide from UDP-MurNAc-pentapeptide onto the lipid carrier undecaprenyl phosphate, yielding undecaprenyl-pyrophosphoryl-MurNAc-pentapeptide, known as lipid I. This chain is Phospho-N-acetylmuramoyl-pentapeptide-transferase, found in Dictyoglomus turgidum (strain DSM 6724 / Z-1310).